The following is a 994-amino-acid chain: Translation initiation factor IF-2 (994 aa).

Polar residues-rich tracts occupy residues 1 to 10 (MSDENNNGRN) and 28 to 40 (SVSSGTVKQSFSH). The disordered stretch occupies residues 1–405 (MSDENNNGRN…REKRKGGAQE (405 aa)). Low complexity predominate over residues 76–91 (PQKPAGPAQAPRAPQG). The span at 98–131 (AEERAARQRAIELARQQEADRRAREERARAEAEA) shows a compositional bias: basic and acidic residues. Residues 132–146 (ARAAQQKAAQAAAEP) show a composition bias toward low complexity. Residues 147-157 (PAAPPPAPAAP) show a composition bias toward pro residues. The segment covering 158–172 (PAAAAPAAPAAEAAP) has biased composition (low complexity). Residues 173 to 188 (APKPAPSPRPVPPSAP) are compositionally biased toward pro residues. The span at 189 to 204 (APQAARPAAEAPPRQA) shows a compositional bias: low complexity. Basic and acidic residues-rich tracts occupy residues 216 to 235 (PDRRDDRPSTTTYRPERPSN) and 247 to 273 (PRRDDDRGPRPPRRDDDRGPRRDDRPQ). Positions 298 to 310 (RGPGGPRGPGGPR) are enriched in gly residues. Basic and acidic residues-rich tracts occupy residues 336-350 (VDRRPDEDDRRRDPG) and 390-402 (RAREREREKRKGG). The region spanning 492-662 (PRPPVVAVMG…LLQAEVLDLK (171 aa)) is the tr-type G domain. The G1 stretch occupies residues 501 to 508 (GHVDHGKT). Residue 501 to 508 (GHVDHGKT) participates in GTP binding. The G2 stretch occupies residues 526–530 (GITQH). The interval 548-551 (DTPG) is G3. GTP contacts are provided by residues 548 to 552 (DTPGH) and 602 to 605 (NKID). Positions 602–605 (NKID) are G4. A G5 region spans residues 638–640 (SAT).

It belongs to the TRAFAC class translation factor GTPase superfamily. Classic translation factor GTPase family. IF-2 subfamily.

The protein localises to the cytoplasm. In terms of biological role, one of the essential components for the initiation of protein synthesis. Protects formylmethionyl-tRNA from spontaneous hydrolysis and promotes its binding to the 30S ribosomal subunits. Also involved in the hydrolysis of GTP during the formation of the 70S ribosomal complex. The polypeptide is Translation initiation factor IF-2 (Phenylobacterium zucineum (strain HLK1)).